The primary structure comprises 288 residues: Syntaxin-1A (288 aa).

Basic and acidic residues predominate over residues 1–13 (MKDRTQELRTAKD). Residues 1–20 (MKDRTQELRTAKDSDDDDDV) are disordered. Residues 1 to 265 (MKDRTQELRT…KYQSKARRKK (265 aa)) are Cytoplasmic-facing. Phosphoserine occurs at positions 14, 64, and 95. Residues 68–109 (DEKTKEELEELMSDIKKTANKVRSKLKSIEQSIEQEEGLNRS) adopt a coiled-coil conformation. Ser188 carries the phosphoserine; by DAPK1 modification. Residues 192–254 (LSEIETRHSE…ERAVSDTKKA (63 aa)) form the t-SNARE coiled-coil homology domain. Glycyl lysine isopeptide (Lys-Gly) (interchain with G-Cter in SUMO) cross-links involve residues Lys252, Lys253, and Lys256. Residues 266-286 (IMIIICCVILGIIIASTIGGI) traverse the membrane as a helical; Anchor for type IV membrane protein segment. Residues 287 to 288 (FG) are Extracellular-facing.

This sequence belongs to the syntaxin family. As to quaternary structure, part of the SNARE core complex containing SNAP25, VAMP2 and STX1A; this complex constitutes the basic catalytic machinery of the complex neurotransmitter release apparatus. The SNARE complex interacts with CPLX1. Interacts with STXBP1. The interaction with STXBP1 promotes assembly of the SNARE complex. Interacts (via C-terminus) with KCNB1 (via C-terminus); the interaction increases in a calcium-dependent manner and induces a pore-independent enhancement of exocytosis in neuroendocrine cells, chromaffin cells, pancreatic beta cells and from the soma of dorsal root ganglia (DRG) neurons. Interacts with SYTL4. Interacts with STXBP6. Interacts with PLCL1 (via C2 domain). Interacts with OTOF. Interacts with LGI3. Interacts (via the H3 domain) with SLC6A4 (via the N-terminus); this interaction regulates SLC4A6 channel conductance in thalamocortical neurons. Interacts with SYT6 and SYT8; the interaction is Ca(2+)-dependent. Interacts with VAMP8. Interacts with SNAP23. Interacts with VAPA and SYBU. Interacts with PRRT2. Interacts with SEPT8. Interacts with STXBP5L. Interacts with synaptotagmin-1/SYT1. Interacts with SEPTIN5; in the cerebellar cortex. Interacts with SEPTIN4; in the striatum. Post-translationally, phosphorylated by CK2. Phosphorylation at Ser-188 by DAPK1 significantly decreases its interaction with STXBP1. In terms of processing, phosphorylated by CK2. Phosphorylation at Ser-188 by DAPK1 significantly decreases its interaction with STXBP1. Sumoylated, sumoylation is required for regulation of synaptic vesicle endocytosis. Expressed in the striatum (at protein level). Expressed in the ileum.

The protein resides in the cytoplasmic vesicle. It localises to the secretory vesicle. Its subcellular location is the synaptic vesicle membrane. The protein localises to the synapse. It is found in the synaptosome. The protein resides in the cell membrane. Its function is as follows. Plays an essential role in hormone and neurotransmitter calcium-dependent exocytosis and endocytosis. Part of the SNARE (Soluble NSF Attachment Receptor) complex composed of SNAP25, STX1A and VAMP2 which mediates the fusion of synaptic vesicles with the presynaptic plasma membrane. STX1A and SNAP25 are localized on the plasma membrane while VAMP2 resides in synaptic vesicles. The pairing of the three SNAREs from the N-terminal SNARE motifs to the C-terminal anchors leads to the formation of the SNARE complex, which brings membranes into close proximity and results in final fusion. Participates in the calcium-dependent regulation of acrosomal exocytosis in sperm. Also plays an important role in the exocytosis of hormones such as insulin or glucagon-like peptide 1 (GLP-1). The chain is Syntaxin-1A (Stx1a) from Mus musculus (Mouse).